Reading from the N-terminus, the 104-residue chain is Urease subunit beta (104 aa).

Belongs to the urease beta subunit family. As to quaternary structure, heterotrimer of UreA (gamma), UreB (beta) and UreC (alpha) subunits. Three heterotrimers associate to form the active enzyme.

The protein resides in the cytoplasm. The catalysed reaction is urea + 2 H2O + H(+) = hydrogencarbonate + 2 NH4(+). It functions in the pathway nitrogen metabolism; urea degradation; CO(2) and NH(3) from urea (urease route): step 1/1. The protein is Urease subunit beta of Mycolicibacterium vanbaalenii (strain DSM 7251 / JCM 13017 / BCRC 16820 / KCTC 9966 / NRRL B-24157 / PYR-1) (Mycobacterium vanbaalenii).